The following is a 170-amino-acid chain: Cathelicidin antimicrobial peptide (170 aa).

Positions 1-30 (MKTQRDGPSLGRWSLLLLLLGLTMPLAVIG) are cleaved as a signal peptide. The propeptide at 31–131 (RVLSYQEAVL…DISCDKDKRK (101 aa)) is cathelin-like domain (CLD). Positions 31 to 131 (RVLSYQEAVL…DISCDKDKRK (101 aa)) are cathelin-like domain (CLD). 2 cysteine pairs are disulfide-bonded: Cys86-Cys97 and Cys108-Cys125. An active core region spans residues 150 to 162 (LKKIGQKIKDFFG).

It belongs to the cathelicidin family. In terms of assembly, monomer, homodimer or homotrimer (in vitro). Oligomerizes as tetra- or hexamer in solution (in vitro). In terms of processing, proteolytically cleaved by proteinase PRTN3 into antibacterial peptide LL-37. Proteolytically cleaved by cathepsin CTSG and neutrophil elastase ELANE. Resistant to proteolytic degradation in solution, and when bound to both zwitterionic (mimicking mammalian membranes) and negatively charged membranes (mimicking bacterial membranes). Post-translationally, after secretion onto the skin surface, the CAMP gene product is processed by a serine protease-dependent mechanism into multiple novel antimicrobial peptides distinct from and shorter than cathelicidin LL-37. These peptides show enhanced antimicrobial action, acquiring the ability to kill skin pathogens such as S.aureus, E.coli and C.albicans. These peptides have lost the ability to stimulate CXCL8/IL8 release from keratinocytes. The peptides act synergistically, killing bacteria at lower concentrations when present together, and maintain activity at increased salt condition.

Its subcellular location is the secreted. The protein localises to the vesicle. In terms of biological role, antimicrobial protein that is an integral component of the innate immune system. Binds to bacterial lipopolysaccharides (LPS). Acts via neutrophil N-formyl peptide receptors to enhance the release of CXCL2. Postsecretory processing generates multiple cathelicidin antimicrobial peptides with various lengths which act as a topical antimicrobial defense in sweat on skin. The unprocessed precursor form, cathelicidin antimicrobial peptide, inhibits the growth of Gram-negative E.coli and E.aerogenes with efficiencies comparable to that of the mature peptide LL-37 (in vitro). Its function is as follows. Antimicrobial peptide that is an integral component of the innate immune system. Binds to bacterial lipopolysaccharides (LPS). Causes membrane permeabilization by forming transmembrane pores (in vitro). Causes lysis of E.coli. Exhibits antimicrobial activity against Gram-negative bacteria such as P.aeruginosa, S.typhimurium, E.aerogenes, E.coli and P.syringae, Gram-positive bacteria such as L.monocytogenes, S.epidermidis, S.pyogenes and S.aureus, as well as vancomycin-resistant enterococci (in vitro). Exhibits antimicrobial activity against methicillin-resistant S.aureus, P.mirabilis, and C.albicans in low-salt media, but not in media containing 100 mM NaCl (in vitro). Forms chiral supramolecular assemblies with quinolone signal (PQS) molecules of P.aeruginosa, which may lead to interference of bacterial quorum signaling and perturbance of bacterial biofilm formation. May form supramolecular fiber-like assemblies on bacterial membranes. Induces cytokine and chemokine producation as well as TNF/TNFA and CSF2/GMCSF production in normal human keratinocytes. Exhibits hemolytic activity against red blood cells. Functionally, exhibits antimicrobial activity against E.coli and B.megaterium (in vitro). This Saguinus oedipus (Cotton-top tamarin) protein is Cathelicidin antimicrobial peptide.